A 2822-amino-acid polypeptide reads, in one-letter code: Piezo-type mechanosensitive ion channel component 2 (2822 aa).

The Cytoplasmic portion of the chain corresponds to 1–12; sequence MASEVVCGLIFR. Residues 13 to 24 traverse the membrane as a helical segment; it reads LLLPICLAVACA. The Extracellular portion of the chain corresponds to 25–30; that stretch reads FRYNGL. Residues 31 to 43 traverse the membrane as a helical segment; sequence SFVYLIYLLLIPL. Residues 44–50 lie on the Cytoplasmic side of the membrane; that stretch reads FSEPTKA. Residues 51 to 76 traverse the membrane as a helical segment; the sequence is TMQGHTGRLLQSLCITSLSFLLLHII. The Extracellular portion of the chain corresponds to 77 to 122; that stretch reads FHITLASLEAQHRITPAYNCSTWEKTFRQIGFESLKGADAGNGIRV. N-linked (GlcNAc...) asparagine glycosylation occurs at Asn95. A helical membrane pass occupies residues 123–141; it reads FVPDIGMFIASLTIWLVCR. Residues 142–221 are Cytoplasmic-facing; the sequence is TIVKKPDTEE…KEFIGNMITT (80 aa). Residues 222-237 form a helical membrane-spanning segment; it reads AGKVVVTILLGSSGMM. Topologically, residues 238–240 are extracellular; that stretch reads LPS. Residues 241-258 traverse the membrane as a helical segment; sequence LTSAVYFFVFLGLCTWWS. Residues 259–264 are Cytoplasmic-facing; it reads WCRTFD. Residues 265 to 287 traverse the membrane as a helical segment; that stretch reads PLLFGCLCVLLAIFTAGHLIGLY. Topologically, residues 288–335 are extracellular; sequence LYQFQFFQEAVPPNDYYARLFGIKSVIQTDCASTWKIIVNPDLSWYHH. The chain crosses the membrane as a helical span at residues 336–355; it reads ANPILLLVMYYTLATLIRIW. The Cytoplasmic segment spans residues 356 to 492; it reads LQEPLVQEEM…SVRMHAMVAV (137 aa). The segment at 450 to 481 is disordered; that stretch reads YRWEPSEESSEKKEEEEDKREDSEGEGSQEEK. The stretch at 455 to 482 forms a coiled coil; it reads SEESSEKKEEEEDKREDSEGEGSQEEKR. A compositionally biased stretch (acidic residues) spans 463-477; the sequence is EEEEDKREDSEGEGS. The chain crosses the membrane as a helical span at residues 493 to 514; the sequence is FQFIMKQSYICALIAMMAWSIT. Residues 515–519 are Extracellular-facing; sequence YHSWL. Residues 520-531 traverse the membrane as a helical segment; it reads TFVLLIWSCTLW. The Cytoplasmic segment spans residues 532-535; it reads MIRN. Residues 536–562 form a helical membrane-spanning segment; that stretch reads RRKYAMISSPFMVVYANLLLVLQYIWS. Residues 563 to 583 lie on the Extracellular side of the membrane; the sequence is FELPEIKKVPGFLEKKEPGEL. The helical transmembrane segment at 584–614 threads the bilayer; sequence ASKILFTITFWLLLRQHLTEQKALREKEALL. The Cytoplasmic portion of the chain corresponds to 615–689; sequence SEVKIGSQEL…GNLVVALFIK (75 aa). Acidic residues-rich tracts occupy residues 624 to 633 and 643 to 652; these read LEEKEDEELQ and EKEEEEEEEI. The interval 624 to 668 is disordered; that stretch reads LEEKEDEELQDVQVEGEPTEKEEEEEEEIKEERHEVKKEEEEEVE. Over residues 653-662 the composition is skewed to basic and acidic residues; sequence KEERHEVKKE. Residues 690-703 form a helical membrane-spanning segment; sequence YWIYVCGGMFFFVS. Residues 704-709 are Extracellular-facing; it reads FEGKIV. The helical transmembrane segment at 710-728 threads the bilayer; it reads MYKIIYMVLFLFCVALYQV. The Cytoplasmic portion of the chain corresponds to 729-737; it reads HYEWWRKIL. The helical transmembrane segment at 738-757 threads the bilayer; it reads KYFWMSVVIYTMLVLIFIYT. Topologically, residues 758-789 are extracellular; it reads YQFENFPGLWQNMTGLKKEKLEDLGLKQFTVA. The helical transmembrane segment at 790–811 threads the bilayer; sequence ELFTRIFIPTSFLLVCILHLHY. Residues 812–957 are Cytoplasmic-facing; it reads FHDRFLELTD…QVFMWWILEL (146 aa). Ser856 bears the Phosphoserine mark. The segment covering 875–901 has biased composition (basic and acidic residues); it reads QKLAESGEERPEECVKKTEKGEAGKDS. The tract at residues 875–919 is disordered; that stretch reads QKLAESGEERPEECVKKTEKGEAGKDSDESEEEEDEEEESEEEES. Over residues 902–919 the composition is skewed to acidic residues; it reads DESEEEEDEEEESEEEES. Residues 958-973 form a helical membrane-spanning segment; sequence HIIKIVSSYIIWVTVK. The Extracellular segment spans residues 974–979; sequence EVSLFN. The helical transmembrane segment at 980-989 threads the bilayer; that stretch reads YVFLISWAFA. Residues 990-997 lie on the Cytoplasmic side of the membrane; the sequence is LPYAKLRR. Residues 998–1018 form a helical membrane-spanning segment; that stretch reads AASSVCTVWTCVIIVCKMLYQ. Topologically, residues 1019–1074 are extracellular; it reads LQTIKPENFSVNCSLPNENQTNIPLHELNKSLLYSAPVDPTEWVGLRKSSPLLVYL. N-linked (GlcNAc...) asparagine glycosylation is present at Asn1030. The cysteines at positions 1031 and 1209 are disulfide-linked. The chain crosses the membrane as a helical span at residues 1075–1099; sequence RNNLLMLAILAFEVTVYRHQEYYRG. Residues 1100-1140 are Cytoplasmic-facing; that stretch reads RNNLTAPVSKTIFHDITRLHLDDGLINCAKYFVNYFFYKFG. A helical transmembrane segment spans residues 1141 to 1155; it reads LETCFLMSVNVIGQR. Residues 1156 to 1157 lie on the Extracellular side of the membrane; it reads MD. The helical transmembrane segment at 1158-1171 threads the bilayer; it reads FYAMIHACWLIGVL. Residues 1172–1182 are Cytoplasmic-facing; that stretch reads YRRRRKAIAEV. The helical transmembrane segment at 1183–1202 threads the bilayer; the sequence is WPKYCCFLACIITFQYFVCI. Topologically, residues 1203-1239 are extracellular; the sequence is GIPPAPCRDYPWRFKGAYFNDNIIKWLYFPDFIVRPN. Residues 1240 to 1260 form a helical membrane-spanning segment; sequence PVFLVYDFMLLLCASLQRQIF. The Cytoplasmic portion of the chain corresponds to 1261–1314; it reads EDENKAAVRIMAGDNVEICMNLDAASFSQHNPVPDFIHCRSYLDMSKVIIFSYL. The helical transmembrane segment at 1315 to 1327 threads the bilayer; that stretch reads FWFVLTIIFITGT. The Extracellular segment spans residues 1328 to 1333; it reads TRISIF. The chain crosses the membrane as a helical span at residues 1334–1346; sequence CMGYLVACFYFLL. Residues 1347–1355 lie on the Cytoplasmic side of the membrane; it reads FGGDLLLKP. Residues 1356–1381 form a helical membrane-spanning segment; it reads IKSILRYWDWLIAYNVFVITMKNILS. Residues 1382–1430 lie on the Extracellular side of the membrane; it reads IGACGYIGALVRNSCWLIQAFSLACTVKGYQMPEDDSRCKLPSGEAGII. Residues 1431-1447 traverse the membrane as a helical segment; it reads WDSICFAFLLLQRRVFM. Residues 1448–1991 are Cytoplasmic-facing; that stretch reads SYYFLHVVAD…YAMYNTLVAR (544 aa). The stretch at 1475-1515 forms a coiled coil; that stretch reads TIVKAVKARIEEEKKSMDQLKRQMDRIKARQQKYKKGKERM. Disordered regions lie at residues 1505-1551 and 1611-1653; these read QQKY…KKKQ and LRQR…KKSD. Basic residues predominate over residues 1611–1621; it reads LRQRRKEKKKL. Residues 1622-1633 are compositionally biased toward basic and acidic residues; sequence AREEQKERRKGS. A helical membrane pass occupies residues 1992–2006; the sequence is SEMVCYFVIILNHMT. Residues 2007–2013 are Extracellular-facing; that stretch reads SASIITL. The helical transmembrane segment at 2014-2025 threads the bilayer; that stretch reads LLPILIFLWAML. Residues 2026–2031 are Cytoplasmic-facing; it reads SVPRPS. Residues 2032 to 2053 traverse the membrane as a helical segment; the sequence is RRFWMMAIVYTEVAIVVKYFFQ. Topologically, residues 2054 to 2086 are extracellular; the sequence is FGFFPWNKDLEIYKERPYFPPNIIGVEKKEGYV. A helical membrane pass occupies residues 2087 to 2105; that stretch reads LYDLIQLLALFFHRSILKC. Topologically, residues 2106–2259 are cytoplasmic; sequence HGLWDEDDIV…HPDYSAVTDV (154 aa). Disordered regions lie at residues 2120-2139 and 2164-2205; these read DKEG…GSSD and IRRK…SVLS. The span at 2170–2197 shows a compositional bias: low complexity; it reads CSSSQISPRSSFSSNRSKRGSTSTRNSS. Residues 2260–2279 traverse the membrane as a helical segment; that stretch reads YVLMFLADTVDFIIIVFGFW. The Extracellular portion of the chain corresponds to 2280-2301; sequence AFGKHSAAADITSSLSEDQVPG. Residues 2302–2322 traverse the membrane as a helical segment; it reads PFLVMVLIQFGTMVVDRALYL. The Cytoplasmic portion of the chain corresponds to 2323 to 2326; it reads RKTV. A helical membrane pass occupies residues 2327-2350; that stretch reads LGKVIFQVILVFGIHFWMFFILPG. Residues 2351-2359 are Extracellular-facing; that stretch reads VTERKFSQN. A helical transmembrane segment spans residues 2360-2382; sequence LVAQLWYFVKCVYFGLSAYQIRC. Topologically, residues 2383-2467 are cytoplasmic; sequence GYPTRVLGNF…YPQPRGQKKK (85 aa). The chain crosses the membrane as a helical span at residues 2468–2491; the sequence is KAVKYGMGGMIIVLLICIVWFPLL. Residues 2492–2739 are Extracellular-facing; the sequence is FMSLIKSVAG…PSLGFLAGYG (248 aa). A glycan (N-linked (GlcNAc...) asparagine) is linked at Asn2692. The chain crosses the membrane as a helical span at residues 2740 to 2760; that stretch reads IMGLYASVVLVIGKFVREFFS. The Cytoplasmic segment spans residues 2761-2822; that stretch reads GISHSIMFEE…MIKWTREKTN (62 aa).

This sequence belongs to the PIEZO (TC 1.A.75) family. Homotrimer; the homotrimer forms a propeller-shaped Piezo channel with a cation-ion conducting pore. Heterotrimeric interaction may occur between PIEZO1 and PIEZO2. Interacts with STOM13. Interacts with TMC7; the interaction inhibits PIEZO2-conducted mechanically activated currents. Interacts with TMC1; the interaction may be part of the MET complex. Interacts with MDFIC (via C-terminus); the interaction prolongs Piezo channel inactivation. Interacts with MDFI (via C-terminus); the interaction prolongs Piezo channel inactivation. As to expression, expressed in bladder, colon, and lung, but less abundant in kidney or skin. Strong expression is observed in dorsal root ganglia (DRG) sensory neurons. Expressed in a wide range of cutaneous low-threshold mechanoreceptors (LTMRs), including Merkel cells and Meissner's corpuscles. Expressed in sensory neurons. Expressed in cochlear inner and outer hair cells and vestibular organ hair cells. Expressed in pulmonary neuroepithelial cell bodies. Expressed in bladder urothelium and sensory neurons of the lower urinary tract. Expressed in sensory endings of proprioceptors innervating muscle spindles and Golgi tendon organs.

It localises to the cell membrane. The catalysed reaction is Ca(2+)(in) = Ca(2+)(out). Regulated by auxillary subunits MDFIC and MDFI. Channel activity is inhibited by TMEM120aa. Phosphatidic acid and lysophosphatidic acid inhibit Piezo2 channel activity. Pore-forming subunit of the mechanosensitive non-specific cation Piezo channel required for rapidly adapting mechanically activated (MA) currents and has a key role in sensing touch and tactile pain. Piezo channels are homotrimeric three-blade propeller-shaped structures that utilize a cap-motion and plug-and-latch mechanism to gate their ion-conducting pathways. Expressed in sensory neurons, is essential for diverse physiological processes, including respiratory control, systemic metabolism, urinary function, and proprioception. Mediates airway stretch sensing, enabling efficient respiration at birth and maintaining normal breathing in adults. It regulates brown and beige adipose tissue morphology and function, preventing systemic hypermetabolism. In the lower urinary tract, acts as a sensor in both the bladder urothelium and innervating sensory neurons and is required for bladder-stretch sensing and urethral micturition reflexes, ensuring proper urinary function. Additionally, Piezo2 serves as the principal mechanotransducer in proprioceptors, facilitating proprioception and coordinated body movements. In inner ear hair cells, PIEZO1/2 subunits may constitute part of the mechanotransducer (MET) non-selective cation channel complex where they may act as pore-forming ion-conducting component in the complex. Required for Merkel-cell mechanotransduction. Plays a major role in light-touch mechanosensation. This chain is Piezo-type mechanosensitive ion channel component 2, found in Mus musculus (Mouse).